We begin with the raw amino-acid sequence, 285 residues long: Putative cysteine-rich repeat secretory protein 14 (285 aa).

The first 30 residues, 1–30 (MSSFCLSKHLILVPILVMMAQLLLIRNVLS), serve as a signal peptide directing secretion. Gnk2-homologous domains lie at 37-143 (YLYH…SIST) and 161-273 (RPNA…RYPF).

The protein belongs to the cysteine-rich repeat secretory protein family.

It is found in the secreted. In Arabidopsis thaliana (Mouse-ear cress), this protein is Putative cysteine-rich repeat secretory protein 14 (CRRSP14).